A 123-amino-acid polypeptide reads, in one-letter code: Photosystem II extrinsic protein U (123 aa).

Residues 1–28 (MKTLARILVVFTLIVGLIGFFNPLPAQA) form the signal peptide.

This sequence belongs to the PsbU family. PSII is composed of 1 copy each of membrane proteins PsbA, PsbB, PsbC, PsbD, PsbE, PsbF, PsbH, PsbI, PsbJ, PsbK, PsbL, PsbM, PsbT, PsbX, PsbY, PsbZ, Psb30/Ycf12, peripheral proteins PsbO, CyanoQ (PsbQ), PsbU, PsbV and a large number of cofactors. It forms dimeric complexes.

It is found in the cellular thylakoid membrane. One of the extrinsic, lumenal subunits of photosystem II (PSII). PSII is a light-driven water plastoquinone oxidoreductase, using light energy to abstract electrons from H(2)O, generating a proton gradient subsequently used for ATP formation. The extrinsic proteins stabilize the structure of photosystem II oxygen-evolving complex (OEC), the ion environment of oxygen evolution and protect the OEC against heat-induced inactivation. The protein is Photosystem II extrinsic protein U of Gloeothece citriformis (strain PCC 7424) (Cyanothece sp. (strain PCC 7424)).